The chain runs to 140 residues: Chorion class A protein Ld2/Ld41 (140 aa).

Positions 1–21 (MNSFALLLVCIQACLVQSVFS) are cleaved as a signal peptide.

This sequence belongs to the chorion protein family.

Its function is as follows. This protein is one of many from the eggshell of the gypsy moth. The sequence is that of Chorion class A protein Ld2/Ld41 from Lymantria dispar (Gypsy moth).